Consider the following 139-residue polypeptide: Cytochrome c-type biogenesis protein CcmE (139 aa).

At 1–7 the chain is on the cytoplasmic side; sequence MTKRQNR. Residues 8–28 form a helical; Signal-anchor for type II membrane protein membrane-spanning segment; that stretch reads MTLVALLVIGVSLTGYLGLKA. At 29–139 the chain is on the periplasmic side; sequence FNENLLYFFS…ADALEKAKNK (111 aa). Heme-binding residues include His-120 and Tyr-124.

This sequence belongs to the CcmE/CycJ family.

It localises to the cell inner membrane. Functionally, heme chaperone required for the biogenesis of c-type cytochromes. Transiently binds heme delivered by CcmC and transfers the heme to apo-cytochromes in a process facilitated by CcmF and CcmH. This chain is Cytochrome c-type biogenesis protein CcmE, found in Ruthia magnifica subsp. Calyptogena magnifica.